Consider the following 143-residue polypeptide: Peptide methionine sulfoxide reductase B9 (143 aa).

One can recognise a MsrB domain in the interval 19–140 (DQDWRAILSP…NSVSLKFSEI (122 aa)). The Zn(2+) site is built by cysteine 58, cysteine 61, cysteine 104, and cysteine 107. An intrachain disulfide couples cysteine 76 to cysteine 129. The active-site Nucleophile is the cysteine 129.

This sequence belongs to the MsrB Met sulfoxide reductase family. Zn(2+) is required as a cofactor.

It is found in the cytoplasm. The protein resides in the cytosol. The enzyme catalyses L-methionyl-[protein] + [thioredoxin]-disulfide + H2O = L-methionyl-(R)-S-oxide-[protein] + [thioredoxin]-dithiol. Its function is as follows. Catalyzes the reduction of methionine sulfoxide (MetSO) to methionine in proteins. Plays a protective role against oxidative stress by restoring activity to proteins that have been inactivated by methionine oxidation. MSRB family specifically reduces the MetSO R-enantiomer. This is Peptide methionine sulfoxide reductase B9 (MSRB9) from Arabidopsis thaliana (Mouse-ear cress).